Consider the following 1260-residue polypeptide: Ankyrin repeat and sterile alpha motif domain-containing protein 1B (1260 aa).

ANK repeat units lie at residues 2–31 (GKDQ…GGIL), 58–87 (SGYT…STNV), 91–120 (KGYF…SHSR), 127–156 (ENET…DPTI), 160–189 (KLET…NLMS), 193–222 (RKHT…DVSC), and 225–254 (EKGS…DANI). Residues 298–326 (HAQEDTAQETRLSSPAQSPSQKTKSETVT) are disordered. Positions 306 to 326 (ETRLSSPAQSPSQKTKSETVT) are enriched in polar residues. Residues Ser310, Ser311, Ser315, Ser354, and Ser365 each carry the phosphoserine modification. 3 disordered regions span residues 368–402 (ELGK…SCGP), 491–513 (PGTG…PSPD), and 556–642 (GCTS…EASL). Over residues 372 to 385 (NGSQSVRTSSTINL) the composition is skewed to polar residues. Thr504 bears the Phosphothreonine mark. A phosphoserine mark is found at Ser508 and Ser511. Low complexity predominate over residues 556–575 (GCTSFTSSPPVSPPTSSVET). A compositionally biased stretch (basic and acidic residues) spans 576–588 (TEIKNEGAEHTDD). Ser739 bears the Phosphoserine mark. The segment at 754–778 (VNWSKSSTAERSSKDNSERTPSFTS) is disordered. Thr773 bears the Phosphothreonine mark. A Phosphoserine modification is found at Ser775. 2 SAM domains span residues 810–876 (CPVQ…LPKM) and 884–949 (YHPT…RLHE). Tyr901 is subject to Phosphotyrosine. A Nuclear localization signal motif is present at residues 935–938 (HRKR). Residues 946–989 (RLHEDPPQKPPRSITLREPSGNHTPPQLSPSLSQSTYTTGGSLD) are disordered. Low complexity predominate over residues 969 to 984 (TPPQLSPSLSQSTYTT). Ser974 is modified (phosphoserine). Residue Tyr1007 is modified to Phosphotyrosine. The PID domain maps to 1056-1213 (IFQSCDYKAF…SFENKPSKPI (158 aa)). The interval 1197-1217 (HSSTLPESFENKPSKPIPKPR) is disordered.

In terms of assembly, interacts with EPHA8. Isoform 2 interacts with COIL. Isoform 3 interacts with DLG4. Nuclear translocation of isoform 3 requires an NMDAR-dependent proteolytic cleavage. A 35 kDa N-terminal form shuttles to the nucleus. Isoform 3 is brain specific and highly enriched in the postsynaptic densities (PSDs), especially in cortical, striatal and hippocampal PSDs.

The protein localises to the cytoplasm. Its subcellular location is the nucleus. It localises to the postsynaptic density. It is found in the cell projection. The protein resides in the dendritic spine. The protein localises to the cajal body. Functionally, isoform 2 may participate in the regulation of nucleoplasmic coilin protein interactions in neuronal and transformed cells. Isoform 3 can regulate global protein synthesis by altering nucleolar numbers. In Rattus norvegicus (Rat), this protein is Ankyrin repeat and sterile alpha motif domain-containing protein 1B (Anks1b).